We begin with the raw amino-acid sequence, 192 residues long: Large ribosomal subunit protein uL5 (192 aa).

It belongs to the universal ribosomal protein uL5 family. In terms of assembly, part of the 50S ribosomal subunit; part of the 5S rRNA/L5/L18/L25 subcomplex. Contacts the 5S rRNA and the P site tRNA. Forms a bridge to the 30S subunit in the 70S ribosome.

Functionally, this is one of the proteins that bind and probably mediate the attachment of the 5S RNA into the large ribosomal subunit, where it forms part of the central protuberance. In the 70S ribosome it contacts protein S13 of the 30S subunit (bridge B1b), connecting the 2 subunits; this bridge is implicated in subunit movement. Contacts the P site tRNA; the 5S rRNA and some of its associated proteins might help stabilize positioning of ribosome-bound tRNAs. This is Large ribosomal subunit protein uL5 from Sphingopyxis alaskensis (strain DSM 13593 / LMG 18877 / RB2256) (Sphingomonas alaskensis).